Reading from the N-terminus, the 122-residue chain is Large ribosomal subunit protein uL14 (122 aa).

It belongs to the universal ribosomal protein uL14 family. Part of the 50S ribosomal subunit. Forms a cluster with proteins L3 and L19. In the 70S ribosome, L14 and L19 interact and together make contacts with the 16S rRNA in bridges B5 and B8.

Functionally, binds to 23S rRNA. Forms part of two intersubunit bridges in the 70S ribosome. The sequence is that of Large ribosomal subunit protein uL14 from Trichlorobacter lovleyi (strain ATCC BAA-1151 / DSM 17278 / SZ) (Geobacter lovleyi).